A 207-amino-acid polypeptide reads, in one-letter code: Large ribosomal subunit protein eL13 (207 aa).

This sequence belongs to the eukaryotic ribosomal protein eL13 family. As to quaternary structure, component of the 60S large ribosomal subunit (LSU).

It localises to the cytoplasm. In terms of biological role, component of the ribosome, a large ribonucleoprotein complex responsible for the synthesis of proteins in the cell. The small ribosomal subunit (SSU) binds messenger RNAs (mRNAs) and translates the encoded message by selecting cognate aminoacyl-transfer RNA (tRNA) molecules. The large subunit (LSU) contains the ribosomal catalytic site termed the peptidyl transferase center (PTC), which catalyzes the formation of peptide bonds, thereby polymerizing the amino acids delivered by tRNAs into a polypeptide chain. The nascent polypeptides leave the ribosome through a tunnel in the LSU and interact with protein factors that function in enzymatic processing, targeting, and the membrane insertion of nascent chains at the exit of the ribosomal tunnel. As part of the LSU, it is probably required for its formation and the maturation of rRNAs. This is Large ribosomal subunit protein eL13 (rpl-13) from Caenorhabditis elegans.